A 95-amino-acid polypeptide reads, in one-letter code: Large ribosomal subunit protein uL23 (95 aa).

The protein belongs to the universal ribosomal protein uL23 family. As to quaternary structure, part of the 50S ribosomal subunit. Contacts protein L29, and trigger factor when it is bound to the ribosome.

Functionally, one of the early assembly proteins it binds 23S rRNA. One of the proteins that surrounds the polypeptide exit tunnel on the outside of the ribosome. Forms the main docking site for trigger factor binding to the ribosome. The polypeptide is Large ribosomal subunit protein uL23 (Coxiella burnetii (strain RSA 493 / Nine Mile phase I)).